The following is a 670-amino-acid chain: Acetyl-coenzyme A synthetase (670 aa).

CoA is bound by residues 205–208 (RRGR) and Thr-326. ATP contacts are provided by residues 402 to 404 (GEP), 426 to 431 (STWWMT), Asp-517, Arg-532, and Arg-543. Mg(2+)-binding residues include His-556 and Val-559. Arg-601 serves as a coordination point for CoA. Lys-626 is modified (N6-acetyllysine).

It belongs to the ATP-dependent AMP-binding enzyme family. Mg(2+) is required as a cofactor. Post-translationally, acetylated. Deacetylation by the SIR2-homolog deacetylase activates the enzyme.

The enzyme catalyses acetate + ATP + CoA = acetyl-CoA + AMP + diphosphate. Catalyzes the conversion of acetate into acetyl-CoA (AcCoA), an essential intermediate at the junction of anabolic and catabolic pathways. AcsA undergoes a two-step reaction. In the first half reaction, AcsA combines acetate with ATP to form acetyl-adenylate (AcAMP) intermediate. In the second half reaction, it can then transfer the acetyl group from AcAMP to the sulfhydryl group of CoA, forming the product AcCoA. The polypeptide is Acetyl-coenzyme A synthetase (Pyrobaculum aerophilum (strain ATCC 51768 / DSM 7523 / JCM 9630 / CIP 104966 / NBRC 100827 / IM2)).